Reading from the N-terminus, the 287-residue chain is Diaminopimelate epimerase (287 aa).

Substrate-binding residues include N13, Q46, and N66. The Proton donor role is filled by C75. Substrate-binding positions include 76 to 77, N166, N199, and 217 to 218; these read GN and ER. The active-site Proton acceptor is the C226. Residue 227 to 228 participates in substrate binding; that stretch reads GT.

The protein belongs to the diaminopimelate epimerase family. Homodimer.

It localises to the cytoplasm. It catalyses the reaction (2S,6S)-2,6-diaminopimelate = meso-2,6-diaminopimelate. The protein operates within amino-acid biosynthesis; L-lysine biosynthesis via DAP pathway; DL-2,6-diaminopimelate from LL-2,6-diaminopimelate: step 1/1. In terms of biological role, catalyzes the stereoinversion of LL-2,6-diaminopimelate (L,L-DAP) to meso-diaminopimelate (meso-DAP), a precursor of L-lysine and an essential component of the bacterial peptidoglycan. The chain is Diaminopimelate epimerase from Paraburkholderia xenovorans (strain LB400).